Here is a 376-residue protein sequence, read N- to C-terminus: MITAVNRPAALHINLAAIKENTRQAKAHLKPGQKLFCVVKANAYGHGAARLAPVMEEAGADGFCVAMLDEGLELRRAQIVKPILVLGLQPAEEAALAAANDISLPVSSLDWLKKAEKVLRKEGLQLKIHLAIDSGMGRIGFSEDEDFKAVNEYLQGNDAFFVEGMFTHFASADSADASYFDYQVKRFKHMESLLTVKPKWIHVDNTAAILFDKDVASDIVRFGIGLYGLNPSSAPGSRDLEPAFALKPAMSFVSELTYVKQIHKGYGVGYGSTHIAEEDEWIGTVPVGYADGWIRKFQGFKVKVGDTYCPIVGRVCMDQFMVLLPKEVPAGTPVELISADPAAPNSLRRAADWLDTIHYEVACQFNDRLDRIYDNE.

The active-site Proton acceptor; specific for D-alanine is the lysine 40. Lysine 40 is modified (N6-(pyridoxal phosphate)lysine). Residue arginine 138 participates in substrate binding. Tyrosine 270 (proton acceptor; specific for L-alanine) is an active-site residue. Methionine 317 provides a ligand contact to substrate.

This sequence belongs to the alanine racemase family. Pyridoxal 5'-phosphate is required as a cofactor.

It catalyses the reaction L-alanine = D-alanine. The protein operates within amino-acid biosynthesis; D-alanine biosynthesis; D-alanine from L-alanine: step 1/1. Its function is as follows. Catalyzes the interconversion of L-alanine and D-alanine. May also act on other amino acids. The protein is Alanine racemase (alr) of Lactobacillus delbrueckii subsp. bulgaricus (strain ATCC 11842 / DSM 20081 / BCRC 10696 / JCM 1002 / NBRC 13953 / NCIMB 11778 / NCTC 12712 / WDCM 00102 / Lb 14).